Consider the following 739-residue polypeptide: Phosphoribosylformylglycinamidine synthase subunit PurL (739 aa).

Histidine 54 is a catalytic residue. ATP-binding residues include tyrosine 57 and lysine 96. Glutamate 98 contributes to the Mg(2+) binding site. Substrate-binding positions include serine 99 to histidine 102 and arginine 121. The active-site Proton acceptor is histidine 100. Aspartate 122 is a Mg(2+) binding site. Residue glutamine 245 participates in substrate binding. Aspartate 273 provides a ligand contact to Mg(2+). Glutamate 317–glutamine 319 provides a ligand contact to substrate. Aspartate 500 and glycine 537 together coordinate ATP. Asparagine 538 serves as a coordination point for Mg(2+). A substrate-binding site is contributed by serine 540.

The protein belongs to the FGAMS family. In terms of assembly, monomer. Part of the FGAM synthase complex composed of 1 PurL, 1 PurQ and 2 PurS subunits.

The protein localises to the cytoplasm. It catalyses the reaction N(2)-formyl-N(1)-(5-phospho-beta-D-ribosyl)glycinamide + L-glutamine + ATP + H2O = 2-formamido-N(1)-(5-O-phospho-beta-D-ribosyl)acetamidine + L-glutamate + ADP + phosphate + H(+). It functions in the pathway purine metabolism; IMP biosynthesis via de novo pathway; 5-amino-1-(5-phospho-D-ribosyl)imidazole from N(2)-formyl-N(1)-(5-phospho-D-ribosyl)glycinamide: step 1/2. In terms of biological role, part of the phosphoribosylformylglycinamidine synthase complex involved in the purines biosynthetic pathway. Catalyzes the ATP-dependent conversion of formylglycinamide ribonucleotide (FGAR) and glutamine to yield formylglycinamidine ribonucleotide (FGAM) and glutamate. The FGAM synthase complex is composed of three subunits. PurQ produces an ammonia molecule by converting glutamine to glutamate. PurL transfers the ammonia molecule to FGAR to form FGAM in an ATP-dependent manner. PurS interacts with PurQ and PurL and is thought to assist in the transfer of the ammonia molecule from PurQ to PurL. This is Phosphoribosylformylglycinamidine synthase subunit PurL from Bacillus cereus (strain Q1).